Consider the following 313-residue polypeptide: Solute carrier family 35 member E3 (313 aa).

9 helical membrane-spanning segments follow: residues 17 to 37 (GLLF…WIYV), 40 to 60 (GFPN…GLYI), 77 to 97 (LLLL…SLQN), 126 to 143 (FSTR…GVIL), 153 to 173 (FLGM…QVWV), 187 to 206 (LLYY…VPFF), 225 to 245 (LMVL…YWII), 252 to 272 (TYNM…YVLF), and 275 to 295 (PLSI…LAYT).

This sequence belongs to the TPT transporter family. SLC35E subfamily.

It localises to the membrane. Functionally, putative transporter. The chain is Solute carrier family 35 member E3 (SLC35E3) from Homo sapiens (Human).